The sequence spans 277 residues: uncharacterized protein (277 aa).

The interval 232–262 (NNESAICESQASSKEDERSDKTTSSSKKKSF) is disordered. Polar residues predominate over residues 234–243 (ESAICESQAS).

Its subcellular location is the cytoplasm. It is found in the nucleus. This is an uncharacterized protein from Schizosaccharomyces pombe (strain 972 / ATCC 24843) (Fission yeast).